A 456-amino-acid polypeptide reads, in one-letter code: Proline-specific permease ProY (456 aa).

Topologically, residues 1-17 (MESNNKLKRGLSTRHIR) are cytoplasmic. Transmembrane regions (helical) follow at residues 18–38 (FMALGSAIGTGLFYGSADAIK) and 39–59 (MAGPSVLLAYIIGGVAAYIIM). Residues 60–95 (RALGEMSVHNPAASSFSRYAQENLGPLAGYITGWTY) are Cytoplasmic-facing. 2 helical membrane passes run 96 to 116 (CFEILIVAIADVTAFGIYMGV) and 117 to 137 (WFPAVPHWIWVLSVVLIICAI). Over 138 to 156 (NLMSVKVFGELEFWFSFFK) the chain is Cytoplasmic. A helical membrane pass occupies residues 157-177 (VATIIIMIVAGIGIIVWGIGN). Residues 178-197 (GGQPTGIHNLWSNGGFFSNG) lie on the Periplasmic side of the membrane. A helical transmembrane segment spans residues 198 to 218 (WLGMIMSLQMVMFAYGGIEII). At 219–242 (GITAGEAKDPEKSIPRAINSVPMR) the chain is on the cytoplasmic side. The helical transmembrane segment at 243–263 (ILVFYVGTLFVIMSIYPWNQV) threads the bilayer. The Periplasmic portion of the chain corresponds to 264 to 277 (GTNGSPFVLTFQHM). The chain crosses the membrane as a helical span at residues 278 to 298 (GITFAASILNFVVLTASLSAI). Residues 299 to 331 (NSDVFGVGRMLHGMAEQGSAPKVFAKTSRRGIP) are Cytoplasmic-facing. The chain crosses the membrane as a helical span at residues 332–352 (WVTVLVMTIALLFAVYLNYIM). Residues 353-355 (PEN) lie on the Periplasmic side of the membrane. Residues 356–376 (VFLVIASLATFATVWVWIMIL) form a helical membrane-spanning segment. The Cytoplasmic segment spans residues 377-399 (LSQIAFRRRLPPEEVKALKFKVP). The chain crosses the membrane as a helical span at residues 400–420 (GGVVTTIAGLIFLVFIIALIG). The Periplasmic portion of the chain corresponds to 421–424 (YHPD). Residues 425-445 (TRISLYVGFAWIVLLLIGWIF) form a helical membrane-spanning segment. Over 446–456 (KRRRDRQLAQA) the chain is Cytoplasmic.

It belongs to the amino acid-polyamine-organocation (APC) superfamily. Amino acid transporter (AAT) (TC 2.A.3.1) family.

Its subcellular location is the cell inner membrane. Its function is as follows. Permease that is involved in the transport across the cytoplasmic membrane of proline. In Salmonella typhimurium (strain LT2 / SGSC1412 / ATCC 700720), this protein is Proline-specific permease ProY (proY).